Reading from the N-terminus, the 142-residue chain is Aspartate 1-decarboxylase (142 aa).

The Schiff-base intermediate with substrate; via pyruvic acid role is filled by S25. S25 carries the pyruvic acid (Ser) modification. Substrate is bound at residue T57. Y58 functions as the Proton donor in the catalytic mechanism. 73-75 (GAA) provides a ligand contact to substrate.

Belongs to the PanD family. As to quaternary structure, heterooctamer of four alpha and four beta subunits. Pyruvate serves as cofactor. Post-translationally, is synthesized initially as an inactive proenzyme, which is activated by self-cleavage at a specific serine bond to produce a beta-subunit with a hydroxyl group at its C-terminus and an alpha-subunit with a pyruvoyl group at its N-terminus.

It is found in the cytoplasm. It carries out the reaction L-aspartate + H(+) = beta-alanine + CO2. Its pathway is cofactor biosynthesis; (R)-pantothenate biosynthesis; beta-alanine from L-aspartate: step 1/1. Catalyzes the pyruvoyl-dependent decarboxylation of aspartate to produce beta-alanine. The sequence is that of Aspartate 1-decarboxylase from Arthrobacter sp. (strain FB24).